Consider the following 158-residue polypeptide: Transcription elongation factor GreA (158 aa).

Positions 46 to 66 (AEYEAAKERQGFIEGRISELE) form a coiled coil.

The protein belongs to the GreA/GreB family.

Necessary for efficient RNA polymerase transcription elongation past template-encoded arresting sites. The arresting sites in DNA have the property of trapping a certain fraction of elongating RNA polymerases that pass through, resulting in locked ternary complexes. Cleavage of the nascent transcript by cleavage factors such as GreA or GreB allows the resumption of elongation from the new 3'terminus. GreA releases sequences of 2 to 3 nucleotides. The chain is Transcription elongation factor GreA from Neisseria meningitidis serogroup A / serotype 4A (strain DSM 15465 / Z2491).